Here is a 137-residue protein sequence, read N- to C-terminus: MEQTFFIIKPDGVKRGLVGEVLKRIEQRGFTIEKLEFRSQVSEELIDQHYQDLVGQSFYPPIREFMTSGPVLVGVISGPKVIETWRTMMGATRPEEALPGTIRGDFAKAAGENEVIQNVVHGSDSEESAKREIALWF.

ATP contacts are provided by lysine 9, phenylalanine 58, arginine 86, threonine 92, arginine 103, and asparagine 113. Residue histidine 121 is the Pros-phosphohistidine intermediate of the active site.

The protein belongs to the NDK family. Homotetramer. It depends on Mg(2+) as a cofactor.

Its subcellular location is the cytoplasm. The catalysed reaction is a 2'-deoxyribonucleoside 5'-diphosphate + ATP = a 2'-deoxyribonucleoside 5'-triphosphate + ADP. It catalyses the reaction a ribonucleoside 5'-diphosphate + ATP = a ribonucleoside 5'-triphosphate + ADP. Functionally, major role in the synthesis of nucleoside triphosphates other than ATP. The ATP gamma phosphate is transferred to the NDP beta phosphate via a ping-pong mechanism, using a phosphorylated active-site intermediate. In Streptococcus pneumoniae (strain P1031), this protein is Nucleoside diphosphate kinase.